A 552-amino-acid polypeptide reads, in one-letter code: Hydroxylamine reductase (552 aa).

The [2Fe-2S] cluster site is built by Cys-5, Cys-8, Cys-20, and Cys-27. 8 residues coordinate hybrid [4Fe-2O-2S] cluster: His-251, Glu-275, Cys-319, Cys-407, Cys-435, Cys-460, Glu-494, and Lys-496. Cys-407 is subject to Cysteine persulfide.

The protein belongs to the HCP family. Requires [2Fe-2S] cluster as cofactor. Hybrid [4Fe-2O-2S] cluster is required as a cofactor.

The protein localises to the cytoplasm. The enzyme catalyses A + NH4(+) + H2O = hydroxylamine + AH2 + H(+). In terms of biological role, catalyzes the reduction of hydroxylamine to form NH(3) and H(2)O. In Shigella sonnei (strain Ss046), this protein is Hydroxylamine reductase.